The sequence spans 199 residues: Riboflavin synthase (199 aa).

Lumazine-binding repeat units lie at residues 1 to 95 (MFSG…IGGH) and 96 to 188 (FVSG…VDTI). Residues 4–6 (GII), 46–48 (CLT), 60–65 (DVTEET), 99–101 (GHV), lysine 130, 139–141 (SLT), and 153–158 (SLIPET) contribute to the 2,4-dihydroxypteridine site.

Homotrimer.

The catalysed reaction is 2 6,7-dimethyl-8-(1-D-ribityl)lumazine + H(+) = 5-amino-6-(D-ribitylamino)uracil + riboflavin. It functions in the pathway cofactor biosynthesis; riboflavin biosynthesis; riboflavin from 2-hydroxy-3-oxobutyl phosphate and 5-amino-6-(D-ribitylamino)uracil: step 2/2. In terms of biological role, catalyzes the dismutation of two molecules of 6,7-dimethyl-8-ribityllumazine, resulting in the formation of riboflavin and 5-amino-6-(D-ribitylamino)uracil. The protein is Riboflavin synthase (ribE) of Chlamydia trachomatis serovar D (strain ATCC VR-885 / DSM 19411 / UW-3/Cx).